Reading from the N-terminus, the 386-residue chain is N-acetylneuraminate epimerase (386 aa).

The signal sequence occupies residues 1 to 29; that stretch reads MGMQMKNFKKMMTLMALCLSVAITTSGYA. Kelch repeat units lie at residues 51-95, 97-149, 151-186, 187-232, 235-284, 306-355, and 357-386; these read VIYV…VFLN, ELYV…VKLN, TMVLITGGVNEHIFDKYFIDIAAAAADESEKNKVIY, NYFN…VMEN, LMLI…LAGA, QNYT…SYGD, and VFLIGGENAKGKPVSSVTSFTMRDGNLLIK. Glu241 acts as the Proton acceptor in catalysis.

The protein belongs to the NanM family. As to quaternary structure, homodimer.

It is found in the periplasm. The catalysed reaction is N-acetyl-alpha-neuraminate = N-acetyl-beta-neuraminate. In terms of biological role, converts alpha-N-acetylneuranimic acid (Neu5Ac) to the beta-anomer, accelerating the equilibrium between the alpha- and beta-anomers. Probably facilitates sialidase-negative bacteria to compete successfully for limited amounts of extracellular Neu5Ac, which is likely taken up in the beta-anomer. In addition, the rapid removal of sialic acid from solution might be advantageous to the bacterium to damp down host responses. In Salmonella choleraesuis (strain SC-B67), this protein is N-acetylneuraminate epimerase.